Reading from the N-terminus, the 260-residue chain is Zinc finger protein 575 (260 aa).

Positions 22-81 are disordered; the sequence is PGLGPGRWLLPGAHQPSCPPAPHQGPLQKPSQSAPGPTASASAPPRPRRRPPPQRPHRCP. The span at 51–64 shows a compositional bias: low complexity; the sequence is PSQSAPGPTASASA. A compositionally biased stretch (basic residues) spans 67–78; it reads RPRRRPPPQRPH. C2H2-type zinc fingers lie at residues 78 to 100, 106 to 128, 134 to 156, 162 to 184, 192 to 214, and 228 to 255; these read HRCP…RLAH, HPCP…RLTH, HPCP…LWTH, YPCP…RHTH, YPCP…RLCH, and HRCS…QVEH.

It belongs to the krueppel C2H2-type zinc-finger protein family.

Its subcellular location is the nucleus. In terms of biological role, may be involved in transcriptional regulation. The polypeptide is Zinc finger protein 575 (ZNF575) (Macaca fascicularis (Crab-eating macaque)).